Reading from the N-terminus, the 372-residue chain is NAD(P)H-quinone oxidoreductase subunit 1 (372 aa).

The next 9 helical transmembrane spans lie at 27-47 (TIWL…GVLV), 65-85 (PEYI…KLVF), 97-117 (WLFT…YLIV), 128-148 (LGIG…GLLM), 176-196 (LALA…IDIV), 204-224 (ILGW…IAAL), 249-269 (YAGM…VLSS), 308-328 (GLGL…AILL), and 351-371 (VGLV…FAFG).

The protein belongs to the complex I subunit 1 family. NDH-1 is composed of at least 11 different subunits.

The protein localises to the cellular thylakoid membrane. It catalyses the reaction a plastoquinone + NADH + (n+1) H(+)(in) = a plastoquinol + NAD(+) + n H(+)(out). The catalysed reaction is a plastoquinone + NADPH + (n+1) H(+)(in) = a plastoquinol + NADP(+) + n H(+)(out). In terms of biological role, NDH-1 shuttles electrons from an unknown electron donor, via FMN and iron-sulfur (Fe-S) centers, to quinones in the respiratory and/or the photosynthetic chain. The immediate electron acceptor for the enzyme in this species is believed to be plastoquinone. Couples the redox reaction to proton translocation, and thus conserves the redox energy in a proton gradient. This Acaryochloris marina (strain MBIC 11017) protein is NAD(P)H-quinone oxidoreductase subunit 1.